The chain runs to 757 residues: E3 ubiquitin-protein ligase RNF12-B (757 aa).

The span at 1–10 (MESADSTGKG) shows a compositional bias: polar residues. Disordered regions lie at residues 1–29 (MESADSTGKGSTEQSESQRQSQMDRLDRE), 68–519 (LQQI…TYES), and 619–652 (EPAEPVAPVESDEGSNVATSATRREGRNSRGGVT). Residues 11–21 (STEQSESQRQS) are compositionally biased toward low complexity. 2 stretches are compositionally biased toward polar residues: residues 110–138 (SVRQTGNTTRSGQRGNQSWRAVSRTNPNS) and 147–163 (INVNRTSGTASMPSLDQ). A run of 21 repeats spans residues 197–202 (PESVDE), 203–208 (PVSVAE), 209–214 (PVSVAE), 215–220 (PVSVAE), 221–226 (PESVAE), 227–232 (PESVAA), 237–242 (PESVPE), 243–248 (PESVPE), 249–254 (PESVPE), 255–260 (PESVPE), 261–266 (PESVPE), 267–272 (PESVPE), 273–278 (PESVPE), 279–284 (PESVPE), 285–290 (PESVPE), 291–296 (PESVPE), 297–302 (PESVPE), 303–308 (PESVPE), 309–314 (PESIAE), 315–320 (PESVPV), and 321–326 (PESVPV). Residues 197-326 (PESVDEPVSV…SVPVPESVPV (130 aa)) form a 21 X 6 AA approximate repeats of P-[EV]-S-V-[PA]-[EV] region. Positions 202-237 (EPVSVAEPVSVAEPVSVAEPESVAEPESVAASVPVP) are enriched in low complexity. Acidic residues predominate over residues 245 to 313 (SVPEPESVPE…ESVPEPESIA (69 aa)). Low complexity predominate over residues 314-327 (EPESVPVPESVPVA). The span at 352–367 (RSPDQRRTRARTDRSR) shows a compositional bias: basic and acidic residues. Polar residues predominate over residues 383-392 (HSSSQTVDAS). The segment covering 408 to 424 (SSQVHSSSSNETEGSSR) has biased composition (low complexity). Residues 428–452 (HITARQQALGTEGQSQSTVHLSNPE) are compositionally biased toward polar residues. The segment covering 453 to 466 (SRSSSQTPQTDSPS) has biased composition (low complexity). Polar residues predominate over residues 467–476 (NAETTGTGQR). Basic and acidic residues predominate over residues 490–500 (RPGDYRQRDSI). The segment covering 501-517 (ANRTRSRSQTPNNTVTY) has biased composition (polar residues). The RING-type; atypical zinc-finger motif lies at 703-744 (CSVCITEYTEGNKLRKLPCSHEYHIHCIDRWLSENSTCPICR). The PDZ-binding signature appears at 754–757 (ESIV).

It belongs to the RNF12 family. Forms homodimers through the C-terminal region. The N-terminus interacts with the homeobox of LIM/homeobox factor lhx1/lim1, with lhx3/lim3 and lhx5/lim5, and with the N-terminus of ldb1. In terms of tissue distribution, shows overlapping expression with lhx1/lim1 and ldb1 in the gastrula mesoderm, and expression overlaps with ldb1 throughout early embryogenesis. After gastrulation, expression is gradually restricted to tissues originated from the ectoderm, the neuroectoderm, neural crest and epidermis, and subsequently to the neural tube as well as the head and tailbud region.

The protein resides in the nucleus. It carries out the reaction S-ubiquitinyl-[E2 ubiquitin-conjugating enzyme]-L-cysteine + [acceptor protein]-L-lysine = [E2 ubiquitin-conjugating enzyme]-L-cysteine + N(6)-ubiquitinyl-[acceptor protein]-L-lysine.. The protein operates within protein modification; protein ubiquitination. In terms of biological role, acts as an E3 ubiquitin-protein ligase specific for ldb1, mediating ubiquitination and proteasome-dependent degradation of excess ldb1 in a RING-dependent manner. Does not degrade ldb1 bound to lhx1/lim1, nor lim1 itself and thus contributes to the establishment of proper ldb1-lhx1/lim1 stoichiometry and the formation of a ldb1-lhx1/lim1 complex. Interferes with Spemann organizer function and suppresses secondary axis formation induced by ldb1 and lhx1/lim1. In Xenopus laevis (African clawed frog), this protein is E3 ubiquitin-protein ligase RNF12-B (rnf12-b).